Here is a 670-residue protein sequence, read N- to C-terminus: DNA ligase (670 aa).

Residues 32–36 (DAYYD), 81–82 (SL), and glutamate 110 each bind NAD(+). The active-site N6-AMP-lysine intermediate is the lysine 112. The NAD(+) site is built by arginine 133, glutamate 170, lysine 289, and lysine 313. Zn(2+) contacts are provided by cysteine 407, cysteine 410, cysteine 425, and cysteine 431. A BRCT domain is found at 590–670 (EDELRLKGQT…ELLVFLGLAG (81 aa)).

The protein belongs to the NAD-dependent DNA ligase family. LigA subfamily. It depends on Mg(2+) as a cofactor. The cofactor is Mn(2+).

The catalysed reaction is NAD(+) + (deoxyribonucleotide)n-3'-hydroxyl + 5'-phospho-(deoxyribonucleotide)m = (deoxyribonucleotide)n+m + AMP + beta-nicotinamide D-nucleotide.. In terms of biological role, DNA ligase that catalyzes the formation of phosphodiester linkages between 5'-phosphoryl and 3'-hydroxyl groups in double-stranded DNA using NAD as a coenzyme and as the energy source for the reaction. It is essential for DNA replication and repair of damaged DNA. This is DNA ligase from Shewanella denitrificans (strain OS217 / ATCC BAA-1090 / DSM 15013).